A 168-amino-acid chain; its full sequence is Nascent polypeptide-associated complex subunit alpha (168 aa).

In terms of domain architecture, NAC-A/B spans Ser14–Leu78. The tract at residues Gln83 to Leu129 is disordered. A compositionally biased stretch (low complexity) spans Ala100–Ala115. The region spanning Leu129–Lys168 is the UBA domain.

This sequence belongs to the NAC-alpha family. In terms of assembly, part of the nascent polypeptide-associated complex (NAC), consisting of EGD2 and EGD1. NAC associates with ribosomes via EGD1.

The protein resides in the cytoplasm. It is found in the nucleus. Its function is as follows. Component of the nascent polypeptide-associated complex (NAC), a dynamic component of the ribosomal exit tunnel, protecting the emerging polypeptides from interaction with other cytoplasmic proteins to ensure appropriate nascent protein targeting. The NAC complex also promotes mitochondrial protein import by enhancing productive ribosome interactions with the outer mitochondrial membrane and blocks the inappropriate interaction of ribosomes translating non-secretory nascent polypeptides with translocation sites in the membrane of the endoplasmic reticulum. EGD2 may also be involved in transcription regulation. The sequence is that of Nascent polypeptide-associated complex subunit alpha (EGD2) from Eremothecium gossypii (strain ATCC 10895 / CBS 109.51 / FGSC 9923 / NRRL Y-1056) (Yeast).